The chain runs to 681 residues: MASAKGSKPNLPESNIAIGIDLGTTYSCVGVWRNENVDIIANDQGNRTTPSYVAFTDTERLIGDAAKNQVARNPENTVFDAKRLIGRKFTESSVQSDMKHWPFTVKSGVDEKPMIEVTYQGEKKLFHPEEISSMVLQKMKENAEAFLGKSIKNAVITVPAYFNDSQRQATKDAGTIAGLNVMRIINEPTAAAIAYGLHKKGKGEKNILIFDLGGGTFDVSLLTIEDGIFEVKATAGDTHLGGEDFDNRLVNFCVEDFKRKNRGKDLSKNSRALRRLRTQCERAKRTLSSSTQATIEIDSLFEGIDYSVTVSRARFEELCIDYFRDTLIPVEKVLKDAMMDKKSVHEVVLVGGSTRIPKIQTLIKEFFNGKEACRSINPDEAVAYGAAVQAAILSGDQSNAVQDLLLLDVCSLSLGLETAGGVMTKLIERNTTIPAKKSQIFTTYADNQPGVLIQVYEGERALTKDNNLLGKFHLDGIPPAPRKVPQIEVTFDIDANGILNVTAVEKSTGKQNHITITNDKGRLSQDEIDRMVNDAEKYKAEDEENRKRIEARNSLENYCYGVKSSLEDQKIKEKLQPAEIETCMKTITTILEWLEKNQLAGKDEYEAKQKEAESVCAPIMSKIYQDAAGAAGGMPGGMPGGMPGGMPSGMPGGMNFPGGMPGAGMPGNAPAGSGPTVEEVD.

Residues 655–665 (NFPGGMPGAGM) are compositionally biased toward gly residues. The segment at 655–681 (NFPGGMPGAGMPGNAPAGSGPTVEEVD) is disordered. The span at 666 to 675 (PGNAPAGSGP) shows a compositional bias: low complexity.

This sequence belongs to the heat shock protein 70 family.

The sequence is that of Heat shock 70 kDa protein from Plasmodium falciparum.